A 733-amino-acid polypeptide reads, in one-letter code: Catalase-peroxidase (733 aa).

A disordered region spans residues 1–25 (MNEERKCPITGATHKPSAEKGRSNH). Residues 16–25 (PSAEKGRSNH) are compositionally biased toward basic and acidic residues. A cross-link (tryptophyl-tyrosyl-methioninium (Trp-Tyr) (with M-245)) is located at residues 96–219 (WHSAGTYRTS…LAAVQMGLIY (124 aa)). The active-site Proton acceptor is His-97. A cross-link (tryptophyl-tyrosyl-methioninium (Tyr-Met) (with W-96)) is located at residues 219-245 (YVNPEGPNGKPDPLAAAKDIRETFARM). His-260 is a binding site for heme b.

Belongs to the peroxidase family. Peroxidase/catalase subfamily. In terms of assembly, homodimer or homotetramer. Requires heme b as cofactor. In terms of processing, formation of the three residue Trp-Tyr-Met cross-link is important for the catalase, but not the peroxidase activity of the enzyme.

It catalyses the reaction H2O2 + AH2 = A + 2 H2O. The catalysed reaction is 2 H2O2 = O2 + 2 H2O. Its function is as follows. Bifunctional enzyme with both catalase and broad-spectrum peroxidase activity. The polypeptide is Catalase-peroxidase (Chlorobium chlorochromatii (strain CaD3)).